Here is a 423-residue protein sequence, read N- to C-terminus: Probable multifunctional protein ADE2 (423 aa).

The segment at 1–263 is SAICAR synthetase; that stretch reads MSSLAEIASR…KVMDITATFS (263 aa). The tract at residues 264–423 is AIR carboxylase; that stretch reads KHQQKCHVLV…NIYNANRKLE (160 aa).

In the N-terminal section; belongs to the SAICAR synthetase family. The protein in the C-terminal section; belongs to the AIR carboxylase family. Class II subfamily.

It catalyses the reaction 5-amino-1-(5-phospho-D-ribosyl)imidazole-4-carboxylate + L-aspartate + ATP = (2S)-2-[5-amino-1-(5-phospho-beta-D-ribosyl)imidazole-4-carboxamido]succinate + ADP + phosphate + 2 H(+). The enzyme catalyses 5-amino-1-(5-phospho-D-ribosyl)imidazole-4-carboxylate + H(+) = 5-amino-1-(5-phospho-beta-D-ribosyl)imidazole + CO2. It participates in purine metabolism; IMP biosynthesis via de novo pathway; 5-amino-1-(5-phospho-D-ribosyl)imidazole-4-carboxamide from 5-amino-1-(5-phospho-D-ribosyl)imidazole-4-carboxylate: step 1/2. Its pathway is purine metabolism; IMP biosynthesis via de novo pathway; 5-amino-1-(5-phospho-D-ribosyl)imidazole-4-carboxylate from 5-amino-1-(5-phospho-D-ribosyl)imidazole (carboxylase route): step 1/1. This is Probable multifunctional protein ADE2 from Caenorhabditis elegans.